A 227-amino-acid chain; its full sequence is Ribonuclease 3 (227 aa).

One can recognise an RNase III domain in the interval 4–126 (LDRLERKIGY…IIGAMSLDQG (123 aa)). Glutamate 39 contributes to the Mg(2+) binding site. Residue aspartate 43 is part of the active site. Mg(2+)-binding residues include aspartate 112 and glutamate 115. Residue glutamate 115 is part of the active site. The 74-residue stretch at 153 to 226 (DAKTRLQEYL…AEQILKELDI (74 aa)) folds into the DRBM domain.

This sequence belongs to the ribonuclease III family. As to quaternary structure, homodimer. Requires Mg(2+) as cofactor.

It localises to the cytoplasm. The catalysed reaction is Endonucleolytic cleavage to 5'-phosphomonoester.. Digests double-stranded RNA. Involved in the processing of primary rRNA transcript to yield the immediate precursors to the large and small rRNAs (23S and 16S). Processes some mRNAs, and tRNAs when they are encoded in the rRNA operon. Processes pre-crRNA and tracrRNA of type II CRISPR loci if present in the organism. The polypeptide is Ribonuclease 3 (Haemophilus influenzae (strain PittGG)).